Consider the following 363-residue polypeptide: 3-isopropylmalate dehydrogenase (363 aa).

78–91 (GKKWDTLPINERPE) lines the NAD(+) pocket. The substrate site is built by arginine 99, arginine 109, arginine 138, and aspartate 227. Residues aspartate 227, aspartate 251, and aspartate 255 each coordinate Mg(2+). 285 to 297 (GSAPDIQGKNIAN) provides a ligand contact to NAD(+).

Belongs to the isocitrate and isopropylmalate dehydrogenases family. LeuB type 1 subfamily. As to quaternary structure, homodimer. Mg(2+) is required as a cofactor. It depends on Mn(2+) as a cofactor.

Its subcellular location is the cytoplasm. The enzyme catalyses (2R,3S)-3-isopropylmalate + NAD(+) = 4-methyl-2-oxopentanoate + CO2 + NADH. It participates in amino-acid biosynthesis; L-leucine biosynthesis; L-leucine from 3-methyl-2-oxobutanoate: step 3/4. In terms of biological role, catalyzes the oxidation of 3-carboxy-2-hydroxy-4-methylpentanoate (3-isopropylmalate) to 3-carboxy-4-methyl-2-oxopentanoate. The product decarboxylates to 4-methyl-2 oxopentanoate. The chain is 3-isopropylmalate dehydrogenase from Buchnera aphidicola subsp. Diuraphis noxia.